Reading from the N-terminus, the 171-residue chain is MVMDTNSLRHIFSRVDADKSGSISANELQTSLSNGLGTPLNIRTVQLMVAMFDRDMNGTINFNEFLGLFKYVQDWQTCFRRYDRDNSGSIDLNEFSNALISFGYHLSPQFVNLMMRRFDRNRGSIAFDDFIYACVCLQTLTREFSRYDCRGIGHTVFSFEQFLTSAFAVII.

EF-hand domains are found at residues 3-38 (MDTN…GLGT), 40-69 (LNIR…LGLF), 70-105 (KYVQ…FGYH), and 106-140 (LSPQ…LQTL). Asp16, Asp18, Ser20, Ser22, Glu27, Asp53, Asp55, Asn57, Thr59, Glu64, Asp83, Asp85, Ser87, Ser89, and Glu94 together coordinate Ca(2+).

Its subcellular location is the cytoplasm. Calcium-binding protein. This chain is Sorcin, found in Schistosoma japonicum (Blood fluke).